The chain runs to 470 residues: Angiopoietin-related protein 6 (470 aa).

The first 20 residues, 1–20, serve as a signal peptide directing secretion; sequence MGKPWLRALQLLLLLGASWA. N-linked (GlcNAc...) asparagine glycosylation occurs at asparagine 58. Positions 59–116 form a coiled coil; it reads ASELAALRMRVGRHEELLRELQRLAAADGAVAGEVRALRKESRGLSARLGQLRAQLQH. The N-linked (GlcNAc...) (complex) asparagine glycan is linked to asparagine 145. Positions 214–249 are disordered; the sequence is SDTSRMLDPAPEPQRDQTQRQQEPMASPMPAGHPAV. In terms of domain architecture, Fibrinogen C-terminal spans 251–469; that stretch reads TKPVGPWQDC…KAAMLIRPLK (219 aa). 2 disulfides stabilise this stretch: cysteine 260/cysteine 287 and cysteine 410/cysteine 423.

The protein resides in the secreted. May play a role in the wound healing process. May promote epidermal proliferation, remodeling and regeneration. May promote the chemotactic activity of endothelial cells and induce neovascularization. May counteract high-fat diet-induced obesity and related insulin resistance through increased energy expenditure. The chain is Angiopoietin-related protein 6 (ANGPTL6) from Homo sapiens (Human).